Here is a 448-residue protein sequence, read N- to C-terminus: High mobility group B protein 15 (448 aa).

The 92-residue stretch at 29–120 (VADPRLFMTS…LLNNYEQIYF (92 aa)) folds into the ARID domain. A compositionally biased stretch (polar residues) spans 219 to 236 (PQQSHGVLPNTLNISANP). Disordered regions lie at residues 219 to 270 (PQQS…RSGY), 333 to 352 (KKNG…LPEQ), and 366 to 448 (VEED…AEQN). Over residues 244–255 (TKRRRRRKKSEI) the composition is skewed to basic residues. The segment at residues 263 to 330 (PKPNRSGYNF…RYRTEMEDYR (68 aa)) is a DNA-binding region (HMG box). The span at 389 to 398 (SIETDPELEE) shows a compositional bias: acidic residues. Low complexity predominate over residues 399 to 412 (PSLNPSGPNLNPNP).

The protein belongs to the HMGB family.

It is found in the nucleus. Functionally, binds preferentially DNA with A/T-rich content. The chain is High mobility group B protein 15 (HMGB15) from Arabidopsis thaliana (Mouse-ear cress).